The sequence spans 189 residues: UPF0301 protein CTLon_0458 (189 aa).

It belongs to the UPF0301 (AlgH) family.

This chain is UPF0301 protein CTLon_0458, found in Chlamydia trachomatis serovar L2b (strain UCH-1/proctitis).